The sequence spans 904 residues: Putative pentatricopeptide repeat-containing protein At1g19290 (904 aa).

PPR repeat units follow at residues 154–188 (SPTV…GRIP), 189–223 (SLLS…EVSP), 224–254 (DVFT…TESS), 260–294 (NVVT…GVSR), 295–329 (NVVT…KLVA), 330–364 (DQHM…GVRT), 365–399 (NTTI…SLKP), 400–434 (DHHT…EVVP), 435–469 (TVMT…GVNA), 470–504 (DEIS…GLLT), 505–539 (DTIT…RCKP), 540–574 (AVQT…GIFP), 575–609 (TIEM…GLTP), 610–644 (TVAT…GITL), 645–679 (NVNI…DLLL), 718–753 (NNIV…RFIP), 754–788 (DEYT…GIIP), 789–823 (NIVT…GITP), and 824–858 (NAIT…GLVR).

The protein belongs to the PPR family. P subfamily.

In Arabidopsis thaliana (Mouse-ear cress), this protein is Putative pentatricopeptide repeat-containing protein At1g19290.